A 111-amino-acid polypeptide reads, in one-letter code: Transcription and mRNA export factor SUS1 (111 aa).

Belongs to the ENY2 family. In terms of assembly, component of the nuclear pore complex (NPC)-associated TREX-2 complex (transcription and export complex 2), composed of at least SUS1, SAC3, THP1, SEM1, and CDC31. TREX-2 contains 2 SUS1 chains. The TREX-2 complex interacts with the nucleoporin NUP1. Component of the 1.8 MDa SAGA transcription coactivator-HAT complex. SAGA is built of 5 distinct domains with specialized functions. Within the SAGA complex, SUS1, SGF11, SGF73 and UBP8 form an additional subcomplex of SAGA called the DUB module (deubiquitination module). Interacts directly with THP1, SAC3, SGF11, and with the RNA polymerase II.

The protein localises to the nucleus. The protein resides in the nucleoplasm. It is found in the cytoplasm. Its subcellular location is the P-body. Its function is as follows. Involved in mRNA export coupled transcription activation by association with both the TREX-2 and the SAGA complexes. At the promoters, SAGA is required for recruitment of the basal transcription machinery. It influences RNA polymerase II transcriptional activity through different activities such as TBP interaction and promoter selectivity, interaction with transcription activators, and chromatin modification through histone acetylation and deubiquitination. Within the SAGA complex, participates in a subcomplex required for deubiquitination of H2B and for the maintenance of steady-state H3 methylation levels. The TREX-2 complex functions in docking export-competent ribonucleoprotein particles (mRNPs) to the nuclear entrance of the nuclear pore complex (nuclear basket). TREX-2 participates in mRNA export and accurate chromatin positioning in the nucleus by tethering genes to the nuclear periphery. May also be involved in cytoplasmic mRNA decay by interaction with components of P-bodies. This chain is Transcription and mRNA export factor SUS1, found in Lodderomyces elongisporus (strain ATCC 11503 / CBS 2605 / JCM 1781 / NBRC 1676 / NRRL YB-4239) (Yeast).